The following is a 903-amino-acid chain: Glutamate receptor ionotropic, NMDA 1 (903 aa).

An N-terminal signal peptide occupies residues 1–20 (MGTMRLFLLAVLFLFSFARA). The Extracellular portion of the chain corresponds to 21–557 (GCDPKIVNIG…TLDSFMQPFQ (537 aa)). Asn61, Asn203, Asn276, Asn300, Asn350, Asn368, Asn440, Asn469, and Asn489 each carry an N-linked (GlcNAc...) asparagine glycan. The cysteines at positions 79 and 308 are disulfide-linked. 2 disulfides stabilise this stretch: Cys420–Cys452 and Cys436–Cys453. Positions 514, 516, and 521 each coordinate glycine. The helical transmembrane segment at 558–578 (STLWLLVGLSVHVVAVMLYLL) threads the bilayer. Topologically, residues 579 to 600 (DRFSPFGRFKVNSEEEEEDALT) are cytoplasmic. Positions 601–620 (LSSAMWFSWGVLLNSGIGEG) are pore-forming. The segment at residues 601–622 (LSSAMWFSWGVLLNSGIGEGAP) is an intramembrane region (discontinuously helical). At 623–628 (RSFSAR) the chain is on the cytoplasmic side. A helical transmembrane segment spans residues 629–645 (ILGMVWAGFAMIIVASY). Residues 646–810 (TANLAAFLVL…NAPATLTFEN (165 aa)) are Extracellular-facing. Residues Ser686 and Asp730 each contribute to the glycine site. Cys742 and Cys796 are oxidised to a cystine. Asn769 carries an N-linked (GlcNAc...) asparagine glycan. A helical membrane pass occupies residues 811 to 831 (MAGVFMLVAGGIVAGIFLIFI). The Cytoplasmic segment spans residues 832-903 (EIAYKRHKDA…SSKDTVNVVV (72 aa)).

It belongs to the glutamate-gated ion channel (TC 1.A.10.1) family. NR1/GRIN1 subfamily. As to quaternary structure, heterotetramer; the NMDAR subunits are modular and harbor tiered domains that function in concert to regulate opening and closing of the cation-selective ion channel pore. Forms heterotetrameric channels composed of two GluN1/zeta subunits (GRIN1), and two identical GluN2/epsilon subunits (GRIN2A, GRIN2B, GRIN2C or GRIN2D) or GluN3 subunits (GRIN3A or GRIN3B) (in vitro). Does not form functional channels by itself. Can also form heterotetrameric channels that contain at least two GluN1 subunits and at least two different GluN2 subunits (or a combination of one GluN2 and one GluN3 subunits) (in vitro). In vivo, the subunit composition may vary in function of the expression levels of the different subunits.

The protein resides in the cell membrane. It is found in the postsynaptic cell membrane. The protein localises to the postsynaptic density membrane. Its subcellular location is the synaptic cell membrane. It catalyses the reaction Ca(2+)(in) = Ca(2+)(out). It carries out the reaction Na(+)(in) = Na(+)(out). The catalysed reaction is K(+)(in) = K(+)(out). NMDA glutamate receptor activity is modulated by zinc ions. The NMDA glutamate receptor activity of the heterotetramer with grin2b is stimulated by micromolar levels of Zn(2+). The NMDA glutamate receptor activity of the heterotetramer with grin2a is inhibited by nanomolar levels of Zn(2+). Component of N-methyl-D-aspartate (NMDA) receptors (NMDARs) that function as heterotetrameric, ligand-gated cation channels with high calcium permeability and voltage-dependent block by Mg(2+). NMDARs participate in synaptic plasticity. Channel activation requires binding of the neurotransmitter L-glutamate to the GluN2 subunit, glycine binding to the GluN1 subunit, plus membrane depolarization to eliminate channel inhibition by Mg(2+). NMDARs mediate simultaneously the potasium efflux and the influx of calcium and sodium. Each GluN2 or GluN3 subunit confers differential attributes to channel properties, including activation, deactivation and desensitization kinetics, pH sensitivity, Ca2(+) permeability, and binding to allosteric modulators. The sequence is that of Glutamate receptor ionotropic, NMDA 1 from Xenopus laevis (African clawed frog).